The following is a 217-amino-acid chain: Small ribosomal subunit protein uS3 (217 aa).

A KH type-2 domain is found at 38-106; the sequence is IRKFIQKELA…QVHINIIEIK (69 aa).

Belongs to the universal ribosomal protein uS3 family. In terms of assembly, part of the 30S ribosomal subunit. Forms a tight complex with proteins S10 and S14.

Binds the lower part of the 30S subunit head. Binds mRNA in the 70S ribosome, positioning it for translation. This is Small ribosomal subunit protein uS3 from Streptococcus uberis (strain ATCC BAA-854 / 0140J).